A 585-amino-acid chain; its full sequence is Arginine--tRNA ligase (585 aa).

A 'HIGH' region motif is present at residues 131–141 (ANPTGPMHVGH).

Belongs to the class-I aminoacyl-tRNA synthetase family. In terms of assembly, monomer.

It is found in the cytoplasm. It carries out the reaction tRNA(Arg) + L-arginine + ATP = L-arginyl-tRNA(Arg) + AMP + diphosphate. The protein is Arginine--tRNA ligase of Brucella canis (strain ATCC 23365 / NCTC 10854 / RM-666).